A 314-amino-acid chain; its full sequence is Ribosomal protein L11 methyltransferase (314 aa).

T164, G185, D207, and N249 together coordinate S-adenosyl-L-methionine.

This sequence belongs to the methyltransferase superfamily. PrmA family.

It localises to the cytoplasm. It catalyses the reaction L-lysyl-[protein] + 3 S-adenosyl-L-methionine = N(6),N(6),N(6)-trimethyl-L-lysyl-[protein] + 3 S-adenosyl-L-homocysteine + 3 H(+). Its function is as follows. Methylates ribosomal protein L11. This Clostridium beijerinckii (strain ATCC 51743 / NCIMB 8052) (Clostridium acetobutylicum) protein is Ribosomal protein L11 methyltransferase.